We begin with the raw amino-acid sequence, 271 residues long: Shikimate dehydrogenase (NADP(+)) (271 aa).

Shikimate contacts are provided by residues 16 to 18 and Thr63; that span reads SRS. Lys67 (proton acceptor) is an active-site residue. 2 residues coordinate shikimate: Asn88 and Asp104. NADP(+)-binding positions include 128 to 132, 152 to 157, and Met215; these read GAGGA and NRTASK. Tyr217 is a binding site for shikimate. Gly238 serves as a coordination point for NADP(+).

It belongs to the shikimate dehydrogenase family. Homodimer.

It carries out the reaction shikimate + NADP(+) = 3-dehydroshikimate + NADPH + H(+). It participates in metabolic intermediate biosynthesis; chorismate biosynthesis; chorismate from D-erythrose 4-phosphate and phosphoenolpyruvate: step 4/7. Its function is as follows. Involved in the biosynthesis of the chorismate, which leads to the biosynthesis of aromatic amino acids. Catalyzes the reversible NADPH linked reduction of 3-dehydroshikimate (DHSA) to yield shikimate (SA). This is Shikimate dehydrogenase (NADP(+)) from Chromohalobacter salexigens (strain ATCC BAA-138 / DSM 3043 / CIP 106854 / NCIMB 13768 / 1H11).